A 430-amino-acid polypeptide reads, in one-letter code: Probable glucose-6-phosphate isomerase (430 aa).

The active-site Proton donor is the glutamate 271. Residues histidine 292, histidine 303, and lysine 403 contribute to the active site.

This sequence belongs to the GPI family.

The protein resides in the cytoplasm. The enzyme catalyses alpha-D-glucose 6-phosphate = beta-D-fructose 6-phosphate. Its pathway is carbohydrate biosynthesis; gluconeogenesis. The protein operates within carbohydrate degradation; glycolysis; D-glyceraldehyde 3-phosphate and glycerone phosphate from D-glucose: step 2/4. Catalyzes the reversible isomerization of glucose-6-phosphate to fructose-6-phosphate. The sequence is that of Probable glucose-6-phosphate isomerase from Haloquadratum walsbyi (strain DSM 16790 / HBSQ001).